Reading from the N-terminus, the 251-residue chain is Exotoxin type A (251 aa).

An N-terminal signal peptide occupies residues methionine 1 to alanine 30. Cysteine 117 and cysteine 128 are disulfide-bonded.

This sequence belongs to the staphylococcal/streptococcal toxin family.

Its function is as follows. Causative agent of the symptoms associated with scarlet fever, have been associated with streptococcal toxic shock-like disease and may play a role in the early events of rheumatic fever. The chain is Exotoxin type A (speA) from Streptococcus pyogenes serotype M18 (strain MGAS8232).